The primary structure comprises 416 residues: Glutamyl-tRNA reductase (416 aa).

Substrate contacts are provided by residues 48–51, S104, 109–111, and Q115; these read TCNR and EPQ. The Nucleophile role is filled by C49. NADP(+) is bound at residue 184 to 189; the sequence is GAGEMI.

This sequence belongs to the glutamyl-tRNA reductase family. In terms of assembly, homodimer.

It catalyses the reaction (S)-4-amino-5-oxopentanoate + tRNA(Glu) + NADP(+) = L-glutamyl-tRNA(Glu) + NADPH + H(+). It participates in porphyrin-containing compound metabolism; protoporphyrin-IX biosynthesis; 5-aminolevulinate from L-glutamyl-tRNA(Glu): step 1/2. In terms of biological role, catalyzes the NADPH-dependent reduction of glutamyl-tRNA(Glu) to glutamate 1-semialdehyde (GSA). The chain is Glutamyl-tRNA reductase from Dechloromonas aromatica (strain RCB).